The following is a 68-amino-acid chain: Phycobilisome 7.8 kDa linker polypeptide, allophycocyanin-associated, core (68 aa).

A CpcD-like domain is found at 2–57 (ARLFKVTACVPSQTRIRTQRELQNTYFTKLVPFENWFREQQRIMKMGGKIVKVELA).

The protein belongs to the phycobilisome linker protein family.

The protein resides in the cellular thylakoid membrane. Its function is as follows. Rod linker protein, associated with allophycocyanin. Linker polypeptides determine the state of aggregation and the location of the disk-shaped phycobiliprotein units within the phycobilisome and modulate their spectroscopic properties in order to mediate a directed and optimal energy transfer. This is Phycobilisome 7.8 kDa linker polypeptide, allophycocyanin-associated, core (apcC) from Microchaete diplosiphon (Fremyella diplosiphon).